We begin with the raw amino-acid sequence, 1285 residues long: DNA polymerase II large subunit (1285 aa).

The interval 565–586 (TRIGGRMGRPGKSKPREMRPPP) is disordered.

Belongs to the archaeal DNA polymerase II family. In terms of assembly, heterodimer of a large subunit and a small subunit. Post-translationally, this protein undergoes a protein self splicing that involves a post-translational excision of the intervening region (intein) followed by peptide ligation.

The catalysed reaction is DNA(n) + a 2'-deoxyribonucleoside 5'-triphosphate = DNA(n+1) + diphosphate. It carries out the reaction Exonucleolytic cleavage in the 3'- to 5'-direction to yield nucleoside 5'-phosphates.. In terms of biological role, possesses two activities: a DNA synthesis (polymerase) and an exonucleolytic activity that degrades single-stranded DNA in the 3'- to 5'-direction. Has a template-primer preference which is characteristic of a replicative DNA polymerase. In Methanoculleus marisnigri (strain ATCC 35101 / DSM 1498 / JR1), this protein is DNA polymerase II large subunit.